A 448-amino-acid polypeptide reads, in one-letter code: Homogentisate 1,2-dioxygenase (448 aa).

Fe cation contacts are provided by H340, E346, and H377.

The protein belongs to the homogentisate dioxygenase family. It depends on Fe cation as a cofactor.

The enzyme catalyses homogentisate + O2 = 4-maleylacetoacetate + H(+). Its pathway is amino-acid degradation; L-phenylalanine degradation; acetoacetate and fumarate from L-phenylalanine: step 4/6. This Emericella nidulans (strain FGSC A4 / ATCC 38163 / CBS 112.46 / NRRL 194 / M139) (Aspergillus nidulans) protein is Homogentisate 1,2-dioxygenase (hmgA).